The sequence spans 379 residues: Cobalt-precorrin-5B C(1)-methyltransferase (379 aa).

It belongs to the CbiD family.

It catalyses the reaction Co-precorrin-5B + S-adenosyl-L-methionine = Co-precorrin-6A + S-adenosyl-L-homocysteine. The protein operates within cofactor biosynthesis; adenosylcobalamin biosynthesis; cob(II)yrinate a,c-diamide from sirohydrochlorin (anaerobic route): step 6/10. Catalyzes the methylation of C-1 in cobalt-precorrin-5B to form cobalt-precorrin-6A. The chain is Cobalt-precorrin-5B C(1)-methyltransferase from Salmonella paratyphi B (strain ATCC BAA-1250 / SPB7).